We begin with the raw amino-acid sequence, 210 residues long: Probable GTP-binding protein EngB (210 aa).

One can recognise an EngB-type G domain in the interval 29-203 (NGIEIAFAGR…SNKLDSWFAP (175 aa)). GTP is bound by residues 37-44 (GRSNAGKS), 64-68 (GRTQL), 82-85 (DLPG), 149-152 (TKAD), and 181-184 (IYSA). S44 and T66 together coordinate Mg(2+).

Belongs to the TRAFAC class TrmE-Era-EngA-EngB-Septin-like GTPase superfamily. EngB GTPase family. The cofactor is Mg(2+).

In terms of biological role, necessary for normal cell division and for the maintenance of normal septation. The protein is Probable GTP-binding protein EngB of Haemophilus ducreyi (strain 35000HP / ATCC 700724).